The following is a 1021-amino-acid chain: Peroxisomal ATPase PEX6 (1021 aa).

Residue 763–770 (GPPGTGKT) coordinates ATP.

It belongs to the AAA ATPase family. As to quaternary structure, interacts with PEX1; forming the PEX1-PEX6 AAA ATPase complex, which is composed of a heterohexamer formed by a trimer of PEX1-PEX6 dimers.

It is found in the cytoplasm. The protein resides in the cytosol. Its subcellular location is the peroxisome membrane. It catalyses the reaction ATP + H2O = ADP + phosphate + H(+). Functionally, component of the PEX1-PEX6 AAA ATPase complex, a protein dislocase complex that mediates the ATP-dependent extraction of the PEX5 receptor from peroxisomal membranes, an essential step for PEX5 recycling. Specifically recognizes PEX5 monoubiquitinated at 'Cys-6', and pulls it out of the peroxisome lumen through the PEX2-PEX10-PEX12 retrotranslocation channel. Extraction by the PEX1-PEX6 AAA ATPase complex is accompanied by unfolding of the TPR repeats and release of bound cargo from PEX5. This Eremothecium gossypii (strain ATCC 10895 / CBS 109.51 / FGSC 9923 / NRRL Y-1056) (Yeast) protein is Peroxisomal ATPase PEX6 (PEX6).